The sequence spans 1411 residues: ATP-dependent permease PDR11 (1411 aa).

Residues 2–388 (SLSKYFNPIP…IGDRNYLISQ (387 aa)) lie on the Cytoplasmic side of the membrane. The region spanning 31–273 (VQNDEESASE…FHDTLQIKKN (243 aa)) is the ABC transporter 1 domain. Residues 389–409 (FVSVVVQSLVIGSLFYNIPLT) form a helical membrane-spanning segment. Topologically, residues 410–418 (TIGSFSRGS) are extracellular. Residues 419–439 (LTFFSILFFTFLSLADMPASF) traverse the membrane as a helical segment. Residues 440–471 (QRQPVVRKHVQLHFYYNWVETLATNFFDCCSK) are Cytoplasmic-facing. The helical transmembrane segment at 472 to 492 (FILVVIFTIILYFLAHLQYNA) threads the bilayer. The Extracellular segment spans residues 493-494 (AR). A helical transmembrane segment spans residues 495–515 (FFIFLLFLSVYNFCMVSLFAL). Residues 516-524 (TALIAPTLS) lie on the Cytoplasmic side of the membrane. The helical transmembrane segment at 525–545 (MANLLAGILLLAIAMYASYVI) threads the bilayer. The Extracellular segment spans residues 546-636 (YMKDMHPWFI…YTYHHVWRNF (91 aa)). The N-linked (GlcNAc...) asparagine glycan is linked to Asn-595. Residues 637 to 657 (GIIIGFLCFFLFCSLLAAEYI) traverse the membrane as a helical segment. At 658–1090 (TPLFTRENLL…QYICTKRDMT (433 aa)) the chain is on the cytoplasmic side. An ABC transporter 2 domain is found at 751 to 979 (ISWKNINYTI…FVAHDRRLTF (229 aa)). Residue 782-789 (GESGAGKT) participates in ATP binding. Residues 1091–1111 (YVFAKYALNAGAGLFIGFSFW) form a helical membrane-spanning segment. The Extracellular segment spans residues 1112-1117 (RTKHNI). Residues 1118–1138 (NGLQDAIFLCFMMLCVSSPLI) traverse the membrane as a helical segment. The Cytoplasmic portion of the chain corresponds to 1139–1175 (NQVQDKALQSKEVYIAREARSNTYHWTVLLIAQTIVE). The helical transmembrane segment at 1176-1196 (LPLAISSSTLFFLCCYFCCGF) threads the bilayer. The Extracellular portion of the chain corresponds to 1197–1204 (ETSARVAG). A helical membrane pass occupies residues 1205-1225 (VFYLNYILFSMYYLSFGLWLL). Over 1226–1230 (YSAPD) the chain is Cytoplasmic. Residues 1231-1251 (LQTAAVFVAFLYSFTASFCGV) form a helical membrane-spanning segment. Topologically, residues 1252–1355 (MQPYSLFPRF…NMSYHHRWRN (104 aa)) are extracellular. N-linked (GlcNAc...) asparagine glycosylation is found at Asn-1289, Asn-1324, and Asn-1346. The helical transmembrane segment at 1356–1376 (FGFEWVFVCFNIAAMFVGFYL) threads the bilayer. The Cytoplasmic segment spans residues 1377–1411 (TYIKKIWPSVIDGIKKCIPSMRRSKTSHNPNEQSV).

The protein belongs to the ABC transporter superfamily. ABCG family. PDR (TC 3.A.1.205) subfamily.

The protein localises to the membrane. In terms of biological role, transporter involved in the uptake of sterol. This Saccharomyces cerevisiae (strain ATCC 204508 / S288c) (Baker's yeast) protein is ATP-dependent permease PDR11 (PDR11).